A 94-amino-acid polypeptide reads, in one-letter code: Pyrimidine/purine nucleoside phosphorylase (94 aa).

Belongs to the nucleoside phosphorylase PpnP family.

It catalyses the reaction a purine D-ribonucleoside + phosphate = a purine nucleobase + alpha-D-ribose 1-phosphate. The catalysed reaction is adenosine + phosphate = alpha-D-ribose 1-phosphate + adenine. The enzyme catalyses cytidine + phosphate = cytosine + alpha-D-ribose 1-phosphate. It carries out the reaction guanosine + phosphate = alpha-D-ribose 1-phosphate + guanine. It catalyses the reaction inosine + phosphate = alpha-D-ribose 1-phosphate + hypoxanthine. The catalysed reaction is thymidine + phosphate = 2-deoxy-alpha-D-ribose 1-phosphate + thymine. The enzyme catalyses uridine + phosphate = alpha-D-ribose 1-phosphate + uracil. It carries out the reaction xanthosine + phosphate = alpha-D-ribose 1-phosphate + xanthine. Functionally, catalyzes the phosphorolysis of diverse nucleosides, yielding D-ribose 1-phosphate and the respective free bases. Can use uridine, adenosine, guanosine, cytidine, thymidine, inosine and xanthosine as substrates. Also catalyzes the reverse reactions. The chain is Pyrimidine/purine nucleoside phosphorylase from Vibrio campbellii (strain ATCC BAA-1116).